The primary structure comprises 188 residues: Ribosome maturation factor RimM (188 aa).

The PRC barrel domain maps to 112 to 187 (SDSYYWVDLI…LLTLDWQSDW (76 aa)).

This sequence belongs to the RimM family. In terms of assembly, binds ribosomal protein uS19.

The protein localises to the cytoplasm. In terms of biological role, an accessory protein needed during the final step in the assembly of 30S ribosomal subunit, possibly for assembly of the head region. Essential for efficient processing of 16S rRNA. May be needed both before and after RbfA during the maturation of 16S rRNA. It has affinity for free ribosomal 30S subunits but not for 70S ribosomes. This Polynucleobacter asymbioticus (strain DSM 18221 / CIP 109841 / QLW-P1DMWA-1) (Polynucleobacter necessarius subsp. asymbioticus) protein is Ribosome maturation factor RimM.